The sequence spans 212 residues: Adenylate kinase (212 aa).

ATP is bound at residue 10 to 15 (GAGKGT). The interval 30 to 59 (AIGDIFRTIIKTSTSEAELINNYVKQGELI) is NMP. Residues arginine 36, 57–59 (ELI), 85–88 (GYPR), and glutamine 92 contribute to the AMP site. The segment at 122–160 (GRYSCKNCGKIYNRYFVQPKTDNVCDVCGSSTFDYRKDD) is LID. ATP is bound at residue arginine 123. The Zn(2+) site is built by cysteine 126 and cysteine 129. 132 to 133 (IY) provides a ligand contact to ATP. The Zn(2+) site is built by cysteine 146 and cysteine 149. Arginine 157 and arginine 168 together coordinate AMP. Lysine 196 contacts ATP.

The protein belongs to the adenylate kinase family. In terms of assembly, monomer.

The protein resides in the cytoplasm. The enzyme catalyses AMP + ATP = 2 ADP. It functions in the pathway purine metabolism; AMP biosynthesis via salvage pathway; AMP from ADP: step 1/1. Catalyzes the reversible transfer of the terminal phosphate group between ATP and AMP. Plays an important role in cellular energy homeostasis and in adenine nucleotide metabolism. This Rickettsia conorii (strain ATCC VR-613 / Malish 7) protein is Adenylate kinase.